We begin with the raw amino-acid sequence, 102 residues long: Large ribosomal subunit protein bL21 (102 aa).

It belongs to the bacterial ribosomal protein bL21 family. As to quaternary structure, part of the 50S ribosomal subunit. Contacts protein L20.

In terms of biological role, this protein binds to 23S rRNA in the presence of protein L20. The sequence is that of Large ribosomal subunit protein bL21 from Exiguobacterium sibiricum (strain DSM 17290 / CCUG 55495 / CIP 109462 / JCM 13490 / 255-15).